The chain runs to 220 residues: Guanylate kinase (220 aa).

The region spanning 14 to 194 (GLMVVISSPS…SYAAIKSIIN (181 aa)) is the Guanylate kinase-like domain. Residue 21–28 (SPSGAGKS) participates in ATP binding.

This sequence belongs to the guanylate kinase family.

Its subcellular location is the cytoplasm. The catalysed reaction is GMP + ATP = GDP + ADP. Functionally, essential for recycling GMP and indirectly, cGMP. In Brucella abortus (strain 2308), this protein is Guanylate kinase.